A 203-amino-acid polypeptide reads, in one-letter code: Outer-membrane lipoprotein LolB (203 aa).

Residues 1-17 form the signal peptide; that stretch reads MNRLFRLLPLASLVLTA. C18 carries the N-palmitoyl cysteine lipid modification. C18 carries S-diacylglycerol cysteine lipidation.

It belongs to the LolB family. As to quaternary structure, monomer.

The protein resides in the cell outer membrane. In terms of biological role, plays a critical role in the incorporation of lipoproteins in the outer membrane after they are released by the LolA protein. The protein is Outer-membrane lipoprotein LolB of Klebsiella pneumoniae (strain 342).